A 796-amino-acid chain; its full sequence is Peroxisome proliferator-activated receptor gamma coactivator 1-alpha (796 aa).

The residue at position 77 (Lys-77) is an N6-acetyllysine. Residues 98 to 138 are disordered; it reads PVDEDGLPSFDALTDGDVTTDNEASPSSMPDGTPPPQEAEE. Residues 114 to 127 show a composition bias toward polar residues; it reads DVTTDNEASPSSMP. Positions 142–146 match the LXXLL motif motif; the sequence is LKKLL. Residue Lys-144 is modified to N6-acetyllysine. At Thr-176 the chain carries Phosphothreonine; by AMPK. Residue Lys-182 is modified to N6-acetyllysine. The disordered stretch occupies residues 211–275; that stretch reads YLTTNDDPPH…NDPKGSPFEN (65 aa). Residues 217–235 show a composition bias toward basic and acidic residues; sequence DPPHTKPTENRNSSRDKCA. Residues 242-258 show a composition bias toward polar residues; it reads TQPQSQHAQAKPTTLSL. 8 positions are modified to N6-acetyllysine: Lys-252, Lys-269, Lys-276, Lys-319, Lys-345, Lys-411, Lys-440, and Lys-449. The tract at residues 288-350 is disordered; sequence GTAGLTPPTT…HSTKKGPEQS (63 aa). Residues 291-337 are interaction with PPARG; the sequence is GLTPPTTPPHKANQDNPFKASPKLKPSCKTVVPPPTKRARYSECSGT. The interval 348–796 is mediates interaction with RNF34; the sequence is EQSELYAQLS…LKEAQRSLRR (449 aa). Phosphoserine; by AMPK is present on Ser-537. Disordered regions lie at residues 541 to 597 and 611 to 669; these read FNSP…SSRS and HRNS…QKQK. Basic residues predominate over residues 561–576; the sequence is QRMRSRSRSFSRHRSC. Residues 577-597 show a composition bias toward low complexity; the sequence is SRSPYSRSRSRSPGSRSSSRS. Residues 620-629 are compositionally biased toward basic residues; it reads SRSRSPYSRR. The span at 630-669 shows a compositional bias: basic and acidic residues; it reads PRYDSYEANEHERLKRDEYRREYEKRESERAKQRERQKQK. Positions 675 to 751 constitute an RRM domain; it reads RVIYVGKIRP…TDFELYFCGR (77 aa). An N6-acetyllysine mark is found at Lys-756 and Lys-777.

Homooligomer. Interacts with MYBBP1A; inhibits MYBBP1A transcriptional activation. Interacts with PRDM16, LPIN1 and PML. Interacts (via LXXLL motif) with RORA and RORC (via AF-2 motif); activates RORA and RORC transcriptional activation. Interacts with LRPPRC. Interacts with FOXO1. Interacts with NR5A2. In terms of processing, phosphorylation by AMPK in skeletal muscle increases activation of its own promoter. Phosphorylated by CLK2. Post-translationally, heavily acetylated by KAT2A/GCN5 under conditions of high nutrients, leading to inactivation of PPARGC1A. Deacetylated by SIRT1 in low nutrients/high NAD conditions, leading to its activation. Ubiquitinated. Ubiquitination by RNF34 induces proteasomal degradation.

It localises to the nucleus. The protein resides in the PML body. Functionally, transcriptional coactivator for steroid receptors and nuclear receptors. Greatly increases the transcriptional activity of PPARG and thyroid hormone receptor on the uncoupling protein promoter. Can regulate key mitochondrial genes that contribute to the program of adaptive thermogenesis. Plays an essential role in metabolic reprogramming in response to dietary availability through coordination of the expression of a wide array of genes involved in glucose and fatty acid metabolism. Acts as a key regulator of gluconeogenesis: stimulates hepatic gluconeogenesis by increasing the expression of gluconeogenic enzymes, and acting together with FOXO1 to promote the fasting gluconeogenic program. Induces the expression of PERM1 in the skeletal muscle in an ESRRA-dependent manner. Also involved in the integration of the circadian rhythms and energy metabolism. Required for oscillatory expression of clock genes, such as BMAL1 and NR1D1, through the coactivation of RORA and RORC, and metabolic genes, such as PDK4 and PEPCK. This chain is Peroxisome proliferator-activated receptor gamma coactivator 1-alpha (Ppargc1a), found in Rattus norvegicus (Rat).